The chain runs to 189 residues: Homeobox protein HD-2 (189 aa).

Residues 119-181 (KPRTRANFPM…NARRRILPFM (63 aa)) constitute a DNA-binding region (homeobox; TALE-type).

Belongs to the TALE/KNOX homeobox family.

It is found in the nucleus. The chain is Homeobox protein HD-2 (HD-2) from Encephalitozoon cuniculi (strain GB-M1) (Microsporidian parasite).